A 244-amino-acid polypeptide reads, in one-letter code: DnaJ homolog subfamily C member 4 (244 aa).

The 66-residue stretch at 37–102 (NYYELLGVHP…ESRRNYDHQL (66 aa)) folds into the J domain. The tract at residues 96 to 127 (RNYDHQLHSASPPKSSGSTAEPKYTQQTHSSW) is disordered. Residues 103 to 127 (HSASPPKSSGSTAEPKYTQQTHSSW) are compositionally biased toward polar residues. Residues 159–178 (VLGYCLLLMVAGMGLHYVAF) form a helical membrane-spanning segment. A disordered region spans residues 208 to 244 (RANRARIQQERQQRQQPRAEPSLPPESSRIMPQDTSP).

The protein resides in the membrane. The sequence is that of DnaJ homolog subfamily C member 4 (Dnajc4) from Mus musculus (Mouse).